A 290-amino-acid chain; its full sequence is Ciliary microtubule inner protein 6 (290 aa).

Residues 76-112 are disordered; the sequence is ENQGDWWPHGKGLENPFQPPYDTKSTQRSDFKKPTCP. Mn regions lie at residues 128–160 and 213–246; these read GIVP…ARKT and SAES…IRVA. The interval 197 to 228 is disordered; sequence SGSCSSEQSKKTEKGNSAESKMISPGLCRQNS.

It localises to the cell projection. The protein resides in the cilium. In Bos taurus (Bovine), this protein is Ciliary microtubule inner protein 6 (CIMIP6).